The following is a 365-amino-acid chain: Flagellar P-ring protein (365 aa).

Positions 1–19 (MIKFLSALILLLVTTAAQA) are cleaved as a signal peptide.

It belongs to the FlgI family. As to quaternary structure, the basal body constitutes a major portion of the flagellar organelle and consists of four rings (L,P,S, and M) mounted on a central rod.

It is found in the periplasm. The protein localises to the bacterial flagellum basal body. Assembles around the rod to form the L-ring and probably protects the motor/basal body from shearing forces during rotation. The chain is Flagellar P-ring protein from Shigella flexneri serotype 5b (strain 8401).